The chain runs to 196 residues: Probable GTP-binding protein EngB (196 aa).

Residues Asn22–Gln196 form the EngB-type G domain. Residues Gly30 to Ser37, Gly57 to Thr61, Asp75 to Gly78, Thr142 to Asp145, and Phe175 to Ser177 contribute to the GTP site. Ser37 and Thr59 together coordinate Mg(2+).

Belongs to the TRAFAC class TrmE-Era-EngA-EngB-Septin-like GTPase superfamily. EngB GTPase family. Mg(2+) serves as cofactor.

In terms of biological role, necessary for normal cell division and for the maintenance of normal septation. The polypeptide is Probable GTP-binding protein EngB (Lactobacillus acidophilus (strain ATCC 700396 / NCK56 / N2 / NCFM)).